The following is a 256-amino-acid chain: Imidazole glycerol phosphate synthase subunit HisF (256 aa).

Residues D12 and D131 contribute to the active site.

This sequence belongs to the HisA/HisF family. In terms of assembly, heterodimer of HisH and HisF.

It is found in the cytoplasm. The enzyme catalyses 5-[(5-phospho-1-deoxy-D-ribulos-1-ylimino)methylamino]-1-(5-phospho-beta-D-ribosyl)imidazole-4-carboxamide + L-glutamine = D-erythro-1-(imidazol-4-yl)glycerol 3-phosphate + 5-amino-1-(5-phospho-beta-D-ribosyl)imidazole-4-carboxamide + L-glutamate + H(+). It participates in amino-acid biosynthesis; L-histidine biosynthesis; L-histidine from 5-phospho-alpha-D-ribose 1-diphosphate: step 5/9. IGPS catalyzes the conversion of PRFAR and glutamine to IGP, AICAR and glutamate. The HisF subunit catalyzes the cyclization activity that produces IGP and AICAR from PRFAR using the ammonia provided by the HisH subunit. The chain is Imidazole glycerol phosphate synthase subunit HisF from Stutzerimonas stutzeri (strain A1501) (Pseudomonas stutzeri).